The sequence spans 809 residues: MSEQRSDEPEVVDAIIEDQQGAQATTDATPPVRIENSLPTELVIYPLGGRPFFPGMLTPIQVEGSPYYETIKKAMDSHGRLFGILASHAEDGQEVFDANQLFGIGTVVRILEASVNEEAKQIKLLAEGLWRFEVRDVVSVGPPIVAQVTHHNNPVSVVDTDALKPYTMAVINTLKEILKYDSLYQEQVKMFLSRHNFSEPDRLADFVASMTSSSREELQEVLETLPIMARLEKVLTLLKKELEVVKLQNKIQRQVEEGIAEHQRQFFLREQLKEIQKELGITKDDRTAEIDRFRERLEKLTLSEEAEQKIEEELDKLAILETGSSEYGVTRNYVDWLTSLPWGVHSTDKLNIARARRILDRDHDGLEDVKERILEFLAVGKLKGEIGGSIILLVGPPGVGKTSIGRSVATAVGREFYRFSVGGMRDEAEIKGHRRTYVGAMPGKFVQAIKHTKVANPLIMLDEVDKIGASYQGDPASALLEVLDPEQNSEFLDHYMDVRFDLSKVLFICTANQLDTIPRPLLDRMEVIRLSGYITSEKVRIARNHLLPKQLEKNGLDKSQLRVSNGALREIIEGYAREAGVRRLEQKIGAIARKVAVKVLEEAELPISVGQNDLDSYLGKPDFREEKPLTGVGIVTGLAWTALGGATLDIESAQTSTEGNTLLLTGQLGDVMKESARIAFSFLQSNVEKLGGKSERLKGNIHLHVPEGATPKDGPSAGITIATALLSLARTQPLPRRLAMTGEITLTGSVLAVGGVREKVIAARRVGIRELIIPEACRKDYDEVPEHIREGFTVHFVKKYAEVAKLVFG.

Residues 42 to 242 (LVIYPLGGRP…KVLTLLKKEL (201 aa)) form the Lon N-terminal domain. An ATP-binding site is contributed by 395–402 (GPPGVGKT). A Lon proteolytic domain is found at 629–809 (LTGVGIVTGL…YAEVAKLVFG (181 aa)). Residues S716 and K759 contribute to the active site.

It belongs to the peptidase S16 family. In terms of assembly, homohexamer. Organized in a ring with a central cavity.

The protein resides in the cytoplasm. The enzyme catalyses Hydrolysis of proteins in presence of ATP.. Functionally, ATP-dependent serine protease that mediates the selective degradation of mutant and abnormal proteins as well as certain short-lived regulatory proteins. Required for cellular homeostasis and for survival from DNA damage and developmental changes induced by stress. Degrades polypeptides processively to yield small peptide fragments that are 5 to 10 amino acids long. Binds to DNA in a double-stranded, site-specific manner. This chain is Lon protease, found in Magnetococcus marinus (strain ATCC BAA-1437 / JCM 17883 / MC-1).